Consider the following 305-residue polypeptide: UDP-3-O-acyl-N-acetylglucosamine deacetylase (305 aa).

Zn(2+)-binding residues include histidine 78, histidine 237, and aspartate 241. Residue histidine 264 is the Proton donor of the active site.

This sequence belongs to the LpxC family. Zn(2+) serves as cofactor.

It catalyses the reaction a UDP-3-O-[(3R)-3-hydroxyacyl]-N-acetyl-alpha-D-glucosamine + H2O = a UDP-3-O-[(3R)-3-hydroxyacyl]-alpha-D-glucosamine + acetate. The protein operates within glycolipid biosynthesis; lipid IV(A) biosynthesis; lipid IV(A) from (3R)-3-hydroxytetradecanoyl-[acyl-carrier-protein] and UDP-N-acetyl-alpha-D-glucosamine: step 2/6. Its function is as follows. Catalyzes the hydrolysis of UDP-3-O-myristoyl-N-acetylglucosamine to form UDP-3-O-myristoylglucosamine and acetate, the committed step in lipid A biosynthesis. The chain is UDP-3-O-acyl-N-acetylglucosamine deacetylase from Dechloromonas aromatica (strain RCB).